Here is a 72-residue protein sequence, read N- to C-terminus: UPF0154 protein BPUM_1692 (72 aa).

The helical transmembrane segment at 4 to 24 (WVVILVGVVALLAGVALGFFI) threads the bilayer.

Belongs to the UPF0154 family.

Its subcellular location is the cell membrane. The polypeptide is UPF0154 protein BPUM_1692 (Bacillus pumilus (strain SAFR-032)).